Reading from the N-terminus, the 533-residue chain is MSSNGDSVKYDTNFDREGYSTDSSNECPNQIDDPLNGIPNSQNSENFQLYSRNNNANELHETFPTTIPIAQQVHLSSFRNSGMVNSNSRSIGPDGSIYSIQPFDRALLQRNFIPNDEMTSNMSFVQMLNSANYDQIEPAFYQNMPGIGNSFMMQSILNPNPNDQEIDNPISDNSTYVLVQGDSNIPTNPQSNPINPTYVSLDLNDCRSNMFEYPSQTGHQYPDINGNGPRLLHCKQELSYPQTNISPFDYRLSRSMQSNTPLSSYKLSLPEIKTISNDWIKGSQNVNFNQNQLLRSTNVSDYTLIKNLPQNLPNPNQTDSIYSSSINENNQPIRNYDSPNPDREDDSEIHENPNPHDTSSVENNDNENSSSGDIGKKRKRRVLFSKKQILELERHFRQKKYLSAPEREHLANLIGLSPTQVKIWFQNHRYKMKRAHHEKALEMGNLAVNRRLNQSMFNDSKSHLPGNFELGINNSFYNSNLALGNLSLNPAVNLMGRIPGMSSMLPTYPNGSQSYFNNINQATLTGSNSSWGV.

Disordered regions lie at residues 1-28 and 308-378; these read MSSN…NECP and LPQN…GKKR. A compositionally biased stretch (basic and acidic residues) spans 8–19; the sequence is VKYDTNFDREGY. Positions 308–317 are enriched in low complexity; sequence LPQNLPNPNQ. Residues 318–333 are compositionally biased toward polar residues; that stretch reads TDSIYSSSINENNQPI. The segment covering 360-371 has biased composition (low complexity); sequence SVENNDNENSSS. Positions 377-436 form a DNA-binding region, homeobox; it reads KRKRRVLFSKKQILELERHFRQKKYLSAPEREHLANLIGLSPTQVKIWFQNHRYKMKRAH.

This sequence belongs to the NK-2 homeobox family. As to expression, intestine and unidentified peripheral parenchymal cells. Slightly higher levels in the cephalic region compared to other body regions.

Its subcellular location is the nucleus. In terms of biological role, this protein might be involved in determination and/or differentiation of nerve cells in the continuous replacement of neurons in the cephalic region. The polypeptide is Homeobox protein DTH-1 (DTH-1) (Girardia tigrina (Planarian)).